We begin with the raw amino-acid sequence, 174 residues long: Ribosome maturation factor RimM (174 aa).

The PRC barrel domain maps to 98–171 (EDEYYFHEII…TIKIHIMEGL (74 aa)).

This sequence belongs to the RimM family. Binds ribosomal protein uS19.

It localises to the cytoplasm. Functionally, an accessory protein needed during the final step in the assembly of 30S ribosomal subunit, possibly for assembly of the head region. Essential for efficient processing of 16S rRNA. May be needed both before and after RbfA during the maturation of 16S rRNA. It has affinity for free ribosomal 30S subunits but not for 70S ribosomes. In Bacillus licheniformis (strain ATCC 14580 / DSM 13 / JCM 2505 / CCUG 7422 / NBRC 12200 / NCIMB 9375 / NCTC 10341 / NRRL NRS-1264 / Gibson 46), this protein is Ribosome maturation factor RimM.